A 449-amino-acid chain; its full sequence is Chromosomal replication initiator protein DnaA (449 aa).

The tract at residues 1–75 (MDTNNDIEKR…EILSQNKVGM (75 aa)) is domain I, interacts with DnaA modulators. The interval 75 to 106 (MHLAHSVDVRIEVASKVHVSDHSNINYKATKS) is domain II. The tract at residues 107–321 (SIKDSYTFEN…GAIIKISVNA (215 aa)) is domain III, AAA+ region. Residues glycine 151, glycine 153, lysine 154, and threonine 155 each coordinate ATP. The tract at residues 322-449 (NLMNAPIDLN…LNELNDKKQH (128 aa)) is domain IV, binds dsDNA.

This sequence belongs to the DnaA family. In terms of assembly, oligomerizes as a right-handed, spiral filament on DNA at oriC.

The protein resides in the cytoplasm. Its function is as follows. Plays an essential role in the initiation and regulation of chromosomal replication. ATP-DnaA binds to the origin of replication (oriC) to initiate formation of the DNA replication initiation complex once per cell cycle. Binds the DnaA box (a 9 base pair repeat at the origin) and separates the double-stranded (ds)DNA. Forms a right-handed helical filament on oriC DNA; dsDNA binds to the exterior of the filament while single-stranded (ss)DNA is stabiized in the filament's interior. The ATP-DnaA-oriC complex binds and stabilizes one strand of the AT-rich DNA unwinding element (DUE), permitting loading of DNA polymerase. After initiation quickly degrades to an ADP-DnaA complex that is not apt for DNA replication. Binds acidic phospholipids. This is Chromosomal replication initiator protein DnaA from Helicobacter acinonychis (strain Sheeba).